Consider the following 350-residue polypeptide: uncharacterized protein (350 aa).

A signal peptide spans 1-26; that stretch reads MKKSGWLVVALIALVVLGVVTSIAVN.

This is an uncharacterized protein from Archaeoglobus fulgidus (strain ATCC 49558 / DSM 4304 / JCM 9628 / NBRC 100126 / VC-16).